The chain runs to 382 residues: V-type proton ATPase subunit C 1 (382 aa).

Position 2 is an N-acetylthreonine (T2).

Belongs to the V-ATPase C subunit family. In terms of assembly, V-ATPase is a heteromultimeric enzyme made up of two complexes: the ATP-hydrolytic V1 complex and the proton translocation V0 complex. The V1 complex consists of three catalytic AB heterodimers that form a heterohexamer, three peripheral stalks each consisting of EG heterodimers, one central rotor including subunits D and F, and the regulatory subunits C and H. The proton translocation complex V0 consists of the proton transport subunit a, a ring of proteolipid subunits c9c'', rotary subunit d, subunits e and f, and the accessory subunits ATP6AP1/Ac45 and ATP6AP2/PRR. In terms of tissue distribution, ubiquitous. Abundant in brain, liver, kidney and testis.

The protein localises to the cytoplasmic vesicle. Its subcellular location is the secretory vesicle. It localises to the synaptic vesicle membrane. The protein resides in the clathrin-coated vesicle membrane. In terms of biological role, subunit of the V1 complex of vacuolar(H+)-ATPase (V-ATPase), a multisubunit enzyme composed of a peripheral complex (V1) that hydrolyzes ATP and a membrane integral complex (V0) that translocates protons. V-ATPase is responsible for acidifying and maintaining the pH of intracellular compartments and in some cell types, is targeted to the plasma membrane, where it is responsible for acidifying the extracellular environment. Subunit C is necessary for the assembly of the catalytic sector of the enzyme and is likely to have a specific function in its catalytic activity. The protein is V-type proton ATPase subunit C 1 (Atp6v1c1) of Mus musculus (Mouse).